Consider the following 368-residue polypeptide: Cell division protein FtsZ 1 (368 aa).

GTP-binding positions include 52–56 (GGGCN), 139–141 (GTG), E170, R174, and D217.

The protein belongs to the FtsZ family. In terms of assembly, homodimer. Polymerizes to form a dynamic ring structure in a strictly GTP-dependent manner. Interacts directly with several other division proteins.

The protein localises to the cytoplasm. Its function is as follows. Essential cell division protein that forms a contractile ring structure (Z ring) at the future cell division site. The regulation of the ring assembly controls the timing and the location of cell division. One of the functions of the FtsZ ring is to recruit other cell division proteins to the septum to produce a new cell wall between the dividing cells. Binds GTP and shows GTPase activity. In Archaeoglobus fulgidus (strain ATCC 49558 / DSM 4304 / JCM 9628 / NBRC 100126 / VC-16), this protein is Cell division protein FtsZ 1.